Consider the following 244-residue polypeptide: DNA polymerase sliding clamp (244 aa).

Belongs to the PCNA family. In terms of assembly, homotrimer. The subunits circularize to form a toroid; DNA passes through its center. Replication factor C (RFC) is required to load the toroid on the DNA.

Its function is as follows. Sliding clamp subunit that acts as a moving platform for DNA processing. Responsible for tethering the catalytic subunit of DNA polymerase to DNA during high-speed replication. In conjunction with replication factor C (RFC) stimulates DNA synthesis by PolB, relieving inhibition by replication protein A (RPA). This chain is DNA polymerase sliding clamp, found in Methanothermobacter thermautotrophicus (strain ATCC 29096 / DSM 1053 / JCM 10044 / NBRC 100330 / Delta H) (Methanobacterium thermoautotrophicum).